The primary structure comprises 105 residues: Ig lambda chain C region (105 aa).

One can recognise an Ig-like domain in the interval 2-100; sequence PKAAPTVNLF…EGTIVEKTVT (99 aa). Cysteine 27 and cysteine 86 are oxidised to a cystine.

The sequence is that of Ig lambda chain C region from Sus scrofa (Pig).